Here is a 183-residue protein sequence, read N- to C-terminus: Ribosome maturation factor RimM (183 aa).

A PRC barrel domain is found at 102-183 (DDDFYWHQLE…CITVDWDPEF (82 aa)).

This sequence belongs to the RimM family. In terms of assembly, binds ribosomal protein uS19.

It localises to the cytoplasm. In terms of biological role, an accessory protein needed during the final step in the assembly of 30S ribosomal subunit, possibly for assembly of the head region. Essential for efficient processing of 16S rRNA. May be needed both before and after RbfA during the maturation of 16S rRNA. It has affinity for free ribosomal 30S subunits but not for 70S ribosomes. The protein is Ribosome maturation factor RimM of Saccharophagus degradans (strain 2-40 / ATCC 43961 / DSM 17024).